Reading from the N-terminus, the 148-residue chain is Ribosome maturation factor RimP (148 aa).

It belongs to the RimP family.

It is found in the cytoplasm. Functionally, required for maturation of 30S ribosomal subunits. The polypeptide is Ribosome maturation factor RimP (Thermosipho africanus (strain TCF52B)).